Here is a 139-residue protein sequence, read N- to C-terminus: Endoribonuclease YbeY (139 aa).

Residues H107, H111, and D117 each contribute to the Zn(2+) site.

Belongs to the endoribonuclease YbeY family. Requires Zn(2+) as cofactor.

The protein localises to the cytoplasm. Its function is as follows. Single strand-specific metallo-endoribonuclease involved in late-stage 70S ribosome quality control and in maturation of the 3' terminus of the 16S rRNA. The sequence is that of Endoribonuclease YbeY from Azobacteroides pseudotrichonymphae genomovar. CFP2.